The chain runs to 101 residues: Small ribosomal subunit protein eS24 (101 aa).

Belongs to the eukaryotic ribosomal protein eS24 family.

The polypeptide is Small ribosomal subunit protein eS24 (Methanocaldococcus jannaschii (strain ATCC 43067 / DSM 2661 / JAL-1 / JCM 10045 / NBRC 100440) (Methanococcus jannaschii)).